Reading from the N-terminus, the 195-residue chain is MKIGILGGTFDPIHYGHLWFAEYARERFKLDKVFFIPNKIPPHRETPLATSKQRYEMVLLATLSNPCFEVLPIELEREGISYMVDTIRDLSSCFSFDELYLLLGNDAFRDFLKWKEPYKIIEKASIIVGSRGIEDYSSDLKNFIKNFENKIFFLDFPYYPISAKEIRERVKRGLSIKYLVPESVEDYIIKNGIYL.

Belongs to the NadD family.

The catalysed reaction is nicotinate beta-D-ribonucleotide + ATP + H(+) = deamido-NAD(+) + diphosphate. The protein operates within cofactor biosynthesis; NAD(+) biosynthesis; deamido-NAD(+) from nicotinate D-ribonucleotide: step 1/1. Its function is as follows. Catalyzes the reversible adenylation of nicotinate mononucleotide (NaMN) to nicotinic acid adenine dinucleotide (NaAD). In Dictyoglomus thermophilum (strain ATCC 35947 / DSM 3960 / H-6-12), this protein is Probable nicotinate-nucleotide adenylyltransferase.